The sequence spans 353 residues: C-X-C chemokine receptor type 2 (353 aa).

At 1–45 (FNMESDSFEDLWKGEDFSNYSYSSDLPPSLPDVAPCRPESLEINK) the chain is on the extracellular side. N-linked (GlcNAc...) asparagine glycosylation occurs at Asn19. The chain crosses the membrane as a helical span at residues 46–72 (YFVVIIYALVFLLSLLGNSLVMLVILY). At 73–81 (SRVGRSVTD) the chain is on the cytoplasmic side. The chain crosses the membrane as a helical span at residues 82 to 102 (VYLLNLALADLLFALTLPIWA). Residues 103–117 (ASKVNGWIFGTFLCK) lie on the Extracellular side of the membrane. Cys116 and Cys193 form a disulfide bridge. A helical membrane pass occupies residues 118 to 139 (VVSLLKEVNFYSGILLLACISV). The Cytoplasmic portion of the chain corresponds to 140-160 (DRYLAIVHATRTLTQKRYLVK). The chain crosses the membrane as a helical span at residues 161-180 (FICLSIWGLSLLLALPVLLF). Over 181-205 (RRTVYSSNVSPACYEDMGNNTANWR) the chain is Extracellular. A helical transmembrane segment spans residues 206-228 (MLLRILPQSFGFIVPLLIMLFCY). Residues 229-248 (GFTLRTLFKAHMGQKHRAMR) lie on the Cytoplasmic side of the membrane. A helical membrane pass occupies residues 249-270 (VIFAVVLIFLLCWLPYSLVLLA). At 271–291 (DTLMRTQVIQETCERRNHIDR) the chain is on the extracellular side. A helical membrane pass occupies residues 292–312 (ALDATEILGILHSCLNPLIYA). The Cytoplasmic portion of the chain corresponds to 313–353 (FIGQKFRHGLLKILAIHGLISKDSLPKDSRPSFVGSSSGHT).

This sequence belongs to the G-protein coupled receptor 1 family. Interacts with IL8. Interacts with GNAI2. Post-translationally, phosphorylated upon ligand binding; which is required for desensitization.

Its subcellular location is the cell membrane. Functionally, receptor for interleukin-8 which is a powerful neutrophil chemotactic factor. Binding of IL-8 to the receptor causes activation of neutrophils. This response is mediated via a G-protein that activates a phosphatidylinositol-calcium second messenger system. Binds to IL-8 with high affinity. Also binds with high affinity to CXCL3, GRO/MGSA and NAP-2. This is C-X-C chemokine receptor type 2 (CXCR2) from Macaca mulatta (Rhesus macaque).